The chain runs to 222 residues: Matrix protein (222 aa).

Residues 46–49 carry the PTAP/PSAP motif motif; that stretch reads PTAP.

Homomultimer. Interacts with viral nucleocapsid. Interacts with host TSG101.

It is found in the virion membrane. The protein resides in the host endomembrane system. Its subcellular location is the host nucleus membrane. Plays a major role in assembly and budding of virion, by recruiting cellular partners of the ESCRT complexes that play a key role in releasing the budding particle from the host membrane. Condensates the ribonucleocapsid core during virus assembly. This Drosophila melanogaster (Fruit fly) protein is Matrix protein (M).